A 209-amino-acid polypeptide reads, in one-letter code: dITP/XTP pyrophosphatase (209 aa).

22–27 is a binding site for substrate; that stretch reads SHNQGK. The active-site Proton acceptor is Asp-83. Asp-83 is a Mg(2+) binding site. Residues Ser-84, 167-170, Lys-190, and 195-196 each bind substrate; these read FGYD and HR.

The protein belongs to the HAM1 NTPase family. In terms of assembly, homodimer. Mg(2+) serves as cofactor.

It catalyses the reaction XTP + H2O = XMP + diphosphate + H(+). It carries out the reaction dITP + H2O = dIMP + diphosphate + H(+). The enzyme catalyses ITP + H2O = IMP + diphosphate + H(+). Functionally, pyrophosphatase that catalyzes the hydrolysis of nucleoside triphosphates to their monophosphate derivatives, with a high preference for the non-canonical purine nucleotides XTP (xanthosine triphosphate), dITP (deoxyinosine triphosphate) and ITP. Seems to function as a house-cleaning enzyme that removes non-canonical purine nucleotides from the nucleotide pool, thus preventing their incorporation into DNA/RNA and avoiding chromosomal lesions. In Zymomonas mobilis subsp. mobilis (strain ATCC 31821 / ZM4 / CP4), this protein is dITP/XTP pyrophosphatase.